Here is a 305-residue protein sequence, read N- to C-terminus: UDP-N-acetylenolpyruvoylglucosamine reductase 2 (305 aa).

Residues 33–197 (VGGKADVFVA…LEARFELEEG (165 aa)) form the FAD-binding PCMH-type domain. Arg176 is a catalytic residue. The active-site Proton donor is Ser226. Residue Glu296 is part of the active site.

The protein belongs to the MurB family. Requires FAD as cofactor.

It is found in the cytoplasm. It catalyses the reaction UDP-N-acetyl-alpha-D-muramate + NADP(+) = UDP-N-acetyl-3-O-(1-carboxyvinyl)-alpha-D-glucosamine + NADPH + H(+). It functions in the pathway cell wall biogenesis; peptidoglycan biosynthesis. In terms of biological role, cell wall formation. The sequence is that of UDP-N-acetylenolpyruvoylglucosamine reductase 2 from Bacillus cereus (strain ZK / E33L).